Consider the following 203-residue polypeptide: Glycerol-3-phosphate acyltransferase (203 aa).

4 helical membrane passes run Leu-6–Val-26, Ala-82–Phe-102, Ala-118–Ile-138, and Tyr-141–Asp-161.

The protein belongs to the PlsY family. Probably interacts with PlsX.

It is found in the cell inner membrane. It carries out the reaction an acyl phosphate + sn-glycerol 3-phosphate = a 1-acyl-sn-glycero-3-phosphate + phosphate. The protein operates within lipid metabolism; phospholipid metabolism. Functionally, catalyzes the transfer of an acyl group from acyl-phosphate (acyl-PO(4)) to glycerol-3-phosphate (G3P) to form lysophosphatidic acid (LPA). This enzyme utilizes acyl-phosphate as fatty acyl donor, but not acyl-CoA or acyl-ACP. The polypeptide is Glycerol-3-phosphate acyltransferase (Shewanella oneidensis (strain ATCC 700550 / JCM 31522 / CIP 106686 / LMG 19005 / NCIMB 14063 / MR-1)).